The chain runs to 442 residues: D-inositol 3-phosphate glycosyltransferase (442 aa).

His15 contacts 1D-myo-inositol 3-phosphate. UDP-N-acetyl-alpha-D-glucosamine-binding positions include 21-22 (QP) and Gly29. Residues 26–31 (DAGGMN), Lys84, Tyr117, Thr141, and Arg161 each bind 1D-myo-inositol 3-phosphate. UDP-N-acetyl-alpha-D-glucosamine-binding residues include Arg235, Lys240, and Gln299. The Mg(2+) site is built by Tyr308, Arg309, and Ser311. Positions 321 and 329 each coordinate UDP-N-acetyl-alpha-D-glucosamine. Mg(2+) is bound at residue Thr335.

It belongs to the glycosyltransferase group 1 family. MshA subfamily. In terms of assembly, homodimer.

The catalysed reaction is 1D-myo-inositol 3-phosphate + UDP-N-acetyl-alpha-D-glucosamine = 1D-myo-inositol 2-acetamido-2-deoxy-alpha-D-glucopyranoside 3-phosphate + UDP + H(+). Functionally, catalyzes the transfer of a N-acetyl-glucosamine moiety to 1D-myo-inositol 3-phosphate to produce 1D-myo-inositol 2-acetamido-2-deoxy-glucopyranoside 3-phosphate in the mycothiol biosynthesis pathway. The protein is D-inositol 3-phosphate glycosyltransferase of Rhodococcus erythropolis (strain PR4 / NBRC 100887).